We begin with the raw amino-acid sequence, 252 residues long: MLGGLVTALRTLTILPIPGKDAVTFSHSLYWFPFVGLLLGALLAALGYVGSLSGWHEFAALLVVLGGIVLTRGMHADGLADVADGFWGGRSKEAALRIMKDPTVGSFGALALSGVMLLKWVAVVRLLSFGLFDVVMAGILLARLVQVLLASALPYARREAGTASAFVAGAGAPHAFSALLFTLALLFPFYTENFPTMLWLLGAALVAGSMVGMVSYRKIGGVTGDVLGAGSELTEVAVWITGALLLSDYLLF.

The next 6 helical transmembrane spans lie at 29–49 (LYWFPFVGLLLGALLAALGYV), 50–70 (GSLSGWHEFAALLVVLGGIVL), 104–124 (VGSFGALALSGVMLLKWVAVV), 129–149 (FGLFDVVMAGILLARLVQVLL), 166–186 (FVAGAGAPHAFSALLFTLALL), and 194–214 (FPTMLWLLGAALVAGSMVGMV).

It belongs to the CobS family. Requires Mg(2+) as cofactor.

The protein resides in the cell inner membrane. It carries out the reaction alpha-ribazole + adenosylcob(III)inamide-GDP = adenosylcob(III)alamin + GMP + H(+). The enzyme catalyses alpha-ribazole 5'-phosphate + adenosylcob(III)inamide-GDP = adenosylcob(III)alamin 5'-phosphate + GMP + H(+). The protein operates within cofactor biosynthesis; adenosylcobalamin biosynthesis; adenosylcobalamin from cob(II)yrinate a,c-diamide: step 7/7. Its function is as follows. Joins adenosylcobinamide-GDP and alpha-ribazole to generate adenosylcobalamin (Ado-cobalamin). Also synthesizes adenosylcobalamin 5'-phosphate from adenosylcobinamide-GDP and alpha-ribazole 5'-phosphate. The protein is Adenosylcobinamide-GDP ribazoletransferase of Chlorobium chlorochromatii (strain CaD3).